Consider the following 176-residue polypeptide: Dynein light chain Tctex-type 5-B (176 aa).

Belongs to the dynein light chain Tctex-type family.

In Xenopus laevis (African clawed frog), this protein is Dynein light chain Tctex-type 5-B (Dynlt5-b).